Reading from the N-terminus, the 357-residue chain is Protein pelota homolog (357 aa).

It belongs to the eukaryotic release factor 1 family. Pelota subfamily. In terms of assembly, monomer. A divalent metal cation is required as a cofactor.

The protein resides in the cytoplasm. Its function is as follows. May function in recognizing stalled ribosomes, interact with stem-loop structures in stalled mRNA molecules, and effect endonucleolytic cleavage of the mRNA. May play a role in the release non-functional ribosomes and degradation of damaged mRNAs. Has endoribonuclease activity. This Thermococcus onnurineus (strain NA1) protein is Protein pelota homolog.